The primary structure comprises 362 residues: DNA replication and repair protein RecF (362 aa).

Residue 31–38 participates in ATP binding; it reads GDNAAGKT.

This sequence belongs to the RecF family.

Its subcellular location is the cytoplasm. Its function is as follows. The RecF protein is involved in DNA metabolism; it is required for DNA replication and normal SOS inducibility. RecF binds preferentially to single-stranded, linear DNA. It also seems to bind ATP. This Hydrogenovibrio crunogenus (strain DSM 25203 / XCL-2) (Thiomicrospira crunogena) protein is DNA replication and repair protein RecF.